A 207-amino-acid chain; its full sequence is Proteasome subunit beta (207 aa).

Positions 1–9 are cleaved as a propeptide — removed in mature form; by autocatalysis; that stretch reads MSNKNTFEG. Thr10 acts as the Nucleophile in catalysis.

This sequence belongs to the peptidase T1B family. As to quaternary structure, the 20S proteasome core is composed of 14 alpha and 14 beta subunits that assemble into four stacked heptameric rings, resulting in a barrel-shaped structure. The two inner rings, each composed of seven catalytic beta subunits, are sandwiched by two outer rings, each composed of seven alpha subunits. The catalytic chamber with the active sites is on the inside of the barrel. Has a gated structure, the ends of the cylinder being occluded by the N-termini of the alpha-subunits. Is capped at one or both ends by the proteasome regulatory ATPase, PAN.

The protein resides in the cytoplasm. The catalysed reaction is Cleavage of peptide bonds with very broad specificity.. Its activity is regulated as follows. The formation of the proteasomal ATPase PAN-20S proteasome complex, via the docking of the C-termini of PAN into the intersubunit pockets in the alpha-rings, triggers opening of the gate for substrate entry. Interconversion between the open-gate and close-gate conformations leads to a dynamic regulation of the 20S proteasome proteolysis activity. Component of the proteasome core, a large protease complex with broad specificity involved in protein degradation. This chain is Proteasome subunit beta, found in Methanobrevibacter ruminantium (strain ATCC 35063 / DSM 1093 / JCM 13430 / OCM 146 / M1) (Methanobacterium ruminantium).